A 634-amino-acid polypeptide reads, in one-letter code: DNA-directed RNA polymerase subunit gamma (634 aa).

Residues cysteine 74, cysteine 76, cysteine 89, and cysteine 92 each coordinate Zn(2+). Mg(2+) is bound by residues aspartate 471, aspartate 473, and aspartate 475.

Belongs to the RNA polymerase beta' chain family. RpoC1 subfamily. As to quaternary structure, in cyanobacteria the RNAP catalytic core is composed of 2 alpha, 1 beta, 1 beta', 1 gamma and 1 omega subunit. When a sigma factor is associated with the core the holoenzyme is formed, which can initiate transcription. Mg(2+) is required as a cofactor. It depends on Zn(2+) as a cofactor.

The catalysed reaction is RNA(n) + a ribonucleoside 5'-triphosphate = RNA(n+1) + diphosphate. Functionally, DNA-dependent RNA polymerase catalyzes the transcription of DNA into RNA using the four ribonucleoside triphosphates as substrates. The polypeptide is DNA-directed RNA polymerase subunit gamma (Parasynechococcus marenigrum (strain WH8102)).